We begin with the raw amino-acid sequence, 178 residues long: uncharacterized protein (178 aa).

A signal peptide spans 1–23; that stretch reads MNYSVIWAITILILGLVLTLAWA.

This is an uncharacterized protein from Invertebrate iridescent virus 3 (IIV-3).